We begin with the raw amino-acid sequence, 470 residues long: Zinc finger protein pat-9 (470 aa).

The disordered stretch occupies residues 1–25 (MENRTPMQHHSGYEIVKSEPPSTPK). 3 consecutive C2H2-type zinc fingers follow at residues 84-106 (YPCN…QNSH), 112-134 (FECD…KRIH), and 140-162 (FVCT…KDMH). The interval 191-235 (MEQEENGGLPASSSASSVISHPLITTTSGNKKRSKAAKAKQTPSS) is disordered. The Nuclear localization signal motif lies at 221 to 230 (KKRSKAAKAK).

The protein belongs to the krueppel C2H2-type zinc-finger protein family. Expressed in body wall muscle and gonad (at protein level).

The protein resides in the nucleus. The protein localises to the chromosome. In terms of biological role, probable transcription factor; required for proper organization of muscle myofilaments and for their recruitment to the M line. The sequence is that of Zinc finger protein pat-9 from Caenorhabditis elegans.